The following is a 359-amino-acid chain: MKENRKIIHIDMDAFYASIEQRDNPKYKGKPLIVGGDPNRRGVVATCSYEARKYGIHSAMPSLTAYKLCPKAIFIRPRMEVYKKVSRQVMNILNEYSNLVEPLSLDEAFVDVSKSKRCKGSATLIALEIKERIFKEVGLTASAGVSFNKFLAKMASDFRKPDGITVITEENSKDFIRKLPIGKFFGVGRVTKNKLNNIGVFKGEDLLGFSEKELIGILGDRGKILYEFARGIDNRQVNPYRIRKSIGKEITLREDIEDIEEMIEILDKIAERVSESLCLLNKKGKTVTLKVKFNDFKHITRSITLEHFLKEKKEIMECVKDLISIVDFKNKKVRLLGITISSLEENIIIEEREQLSFDV.

The UmuC domain maps to 7–188 (IIHIDMDAFY…LPIGKFFGVG (182 aa)). Mg(2+) is bound by residues Asp11 and Asp106. Glu107 is an active-site residue.

This sequence belongs to the DNA polymerase type-Y family. In terms of assembly, monomer. Mg(2+) serves as cofactor.

It is found in the cytoplasm. It catalyses the reaction DNA(n) + a 2'-deoxyribonucleoside 5'-triphosphate = DNA(n+1) + diphosphate. In terms of biological role, poorly processive, error-prone DNA polymerase involved in untargeted mutagenesis. Copies undamaged DNA at stalled replication forks, which arise in vivo from mismatched or misaligned primer ends. These misaligned primers can be extended by PolIV. Exhibits no 3'-5' exonuclease (proofreading) activity. May be involved in translesional synthesis, in conjunction with the beta clamp from PolIII. The sequence is that of DNA polymerase IV from Clostridium perfringens (strain SM101 / Type A).